Consider the following 186-residue polypeptide: Sec-independent protein translocase protein TatB (186 aa).

The chain crosses the membrane as a helical span at residues Met1–Gly21. Residues Asn120–Ser186 are disordered. Polar residues predominate over residues Ser177–Ser186.

It belongs to the TatB family. As to quaternary structure, the Tat system comprises two distinct complexes: a TatABC complex, containing multiple copies of TatA, TatB and TatC subunits, and a separate TatA complex, containing only TatA subunits. Substrates initially bind to the TatABC complex, which probably triggers association of the separate TatA complex to form the active translocon.

It is found in the cell inner membrane. Part of the twin-arginine translocation (Tat) system that transports large folded proteins containing a characteristic twin-arginine motif in their signal peptide across membranes. Together with TatC, TatB is part of a receptor directly interacting with Tat signal peptides. TatB may form an oligomeric binding site that transiently accommodates folded Tat precursor proteins before their translocation. This Haemophilus influenzae (strain ATCC 51907 / DSM 11121 / KW20 / Rd) protein is Sec-independent protein translocase protein TatB.